Reading from the N-terminus, the 512-residue chain is Sodium/proline symporter (512 aa).

Helical transmembrane passes span 16-36 (WQTY…GFYG), 54-74 (IGPY…WMIM), 85-105 (LSAM…YFVV), 139-159 (IISG…GFVS), 174-194 (FGLI…GYLA), 200-220 (FFQG…AMMN), 247-267 (IGII…HIII), 286-306 (ISWM…GIAF), 327-347 (VLFH…AIMS), 381-401 (FVMI…AIAW), 410-430 (LVGN…LFAL), 438-458 (AGAV…IAWI), and 467-487 (IFGL…TYVV).

Belongs to the sodium:solute symporter (SSF) (TC 2.A.21) family.

Its subcellular location is the cell membrane. The catalysed reaction is L-proline(in) + Na(+)(in) = L-proline(out) + Na(+)(out). Its function is as follows. Catalyzes the sodium-dependent uptake of extracellular L-proline. Since most S.aureus strains are L-proline auxotrophs, this transporter may aid the bacterial persistence during an infection of tissues with low proline concentrations. This is Sodium/proline symporter (putP) from Staphylococcus aureus (strain USA300).